The sequence spans 357 residues: Elongation factor Ts (357 aa).

Positions 82–85 (TDFV) are involved in Mg(2+) ion dislocation from EF-Tu.

Belongs to the EF-Ts family.

The protein localises to the cytoplasm. Associates with the EF-Tu.GDP complex and induces the exchange of GDP to GTP. It remains bound to the aminoacyl-tRNA.EF-Tu.GTP complex up to the GTP hydrolysis stage on the ribosome. The sequence is that of Elongation factor Ts from Campylobacter jejuni subsp. jejuni serotype O:6 (strain 81116 / NCTC 11828).